The following is a 2595-amino-acid chain: Glucosylceramide transporter ABCA12 (2595 aa).

Residues 23 to 43 traverse the membrane as a helical segment; sequence PLWTLVLILWPVIIFIILAIT. Residues 109–119 are compositionally biased toward basic and acidic residues; the sequence is LKKPSNPKRDS. The interval 109-143 is disordered; the sequence is LKKPSNPKRDSNLSLRSTQVPERSHTSLATVPPRP. Asparagine 120, asparagine 156, asparagine 174, asparagine 214, asparagine 275, asparagine 331, asparagine 365, asparagine 381, asparagine 410, asparagine 433, asparagine 455, asparagine 526, asparagine 541, asparagine 574, asparagine 605, asparagine 645, asparagine 749, asparagine 773, asparagine 812, asparagine 823, asparagine 854, asparagine 917, and asparagine 960 each carry an N-linked (GlcNAc...) asparagine glycan. A compositionally biased stretch (polar residues) spans 120–137; it reads NLSLRSTQVPERSHTSLA. 3 helical membrane-spanning segments follow: residues 1062–1082, 1109–1129, and 1142–1162; these read VSYSLPIVLMVAWVVFIAAFV, FAWLIESIGFLLVTIAILIVI, and FILFLYFSDYSFSVIAMSYLI. A glycan (N-linked (GlcNAc...) asparagine) is linked at asparagine 1167. Helical transmembrane passes span 1171–1191, 1197–1217, and 1247–1267; these read IAALIGSLIYVIAFFPFIVLV, LSYVIKVFMSLLSPTAFSYAS, and FGWLCCLILADSFIYFFIAWY. Asparagine 1319 carries an N-linked (GlcNAc...) asparagine glycan. In terms of domain architecture, ABC transporter 1 spans 1346-1577; it reads VALHGVTKIY…FGDGYHLTLT (232 aa). Residue 1378–1385 participates in ATP binding; sequence GPNGAGKT. N-linked (GlcNAc...) asparagine glycosylation is found at asparagine 1524, asparagine 1663, asparagine 1673, asparagine 1686, asparagine 1690, and asparagine 1704. Residues 1672–1703 are disordered; that stretch reads SNMSLEHLTQRKVGNPSANGTSTPDDLSVSSS. A compositionally biased stretch (polar residues) spans 1687–1703; sequence PSANGTSTPDDLSVSSS. A helical membrane pass occupies residues 1747–1767; that stretch reads LIAQVILPIVFVATAMGLGTL. N-linked (GlcNAc...) asparagine glycans are attached at residues asparagine 1819, asparagine 1835, asparagine 1876, asparagine 1921, and asparagine 1952. 7 consecutive transmembrane segments (helical) span residues 1979–1999, 2035–2055, 2072–2092, 2103–2123, 2143–2163, 2187–2207, and 2270–2290; these read ATISSLIDILVALSILMGYSV, FIYDMVFYLVPVAFSIGVIAI, LLLLLFGYATFSWMYLLAGLF, VCVNLFFGINSIVSLSVVYFL, IFLIFPQFCFGYGLIELSQQQ, GAMFVALVSQGTMFFLLRLLI, and IIAVNNISLGIPAGECFGLLG. The ABC transporter 2 domain maps to 2254-2489; it reads VQLHRLTKTY…FGRGFTVKVH (236 aa). ATP is bound at residue 2290–2297; it reads GVNGAGKT. N-linked (GlcNAc...) asparagine glycans are attached at residues asparagine 2318, asparagine 2542, and asparagine 2547. Polar residues predominate over residues 2575–2587; the sequence is VDTSSQGSTISVD. The tract at residues 2575 to 2595 is disordered; the sequence is VDTSSQGSTISVDSQEDQLDS.

This sequence belongs to the ABC transporter superfamily. ABCA family. Interacts with NR1H2 and ABCA1; this interaction is required for ABCA1 localization to the cell surface and is necessary for its normal activity and stability. As to expression, expressed in a number of other tissues besides skin, including heart, intestine, stomach, and kidney. Expressed mainly in the granular layer of the skin. Expressed in lung. Expressed in alpha and beta cells of pancreatic islets.

It is found in the cytoplasmic vesicle. Its subcellular location is the secretory vesicle membrane. The protein resides in the golgi apparatus membrane. The enzyme catalyses ATP + H2O + phospholipidSide 1 = ADP + phosphate + phospholipidSide 2.. It catalyses the reaction a beta-D-glucosylceramide(in) + ATP + H2O = a beta-D-glucosylceramide(out) + ADP + phosphate + H(+). In terms of biological role, transports lipids such as glucosylceramides from the outer to the inner leaflet of lamellar granules (LGs) membrane, whereby the lipids are finally transported to the keratinocyte periphery via the trans-Golgi network and LGs and released to the apical surface of the granular keratinocytes to form lipid lamellae in the stratum corneum of the epidermis, which is essential for skin barrier function. In the meantime, participates in the transport of the lamellar granules-associated proteolytic enzymes, in turn regulates desquamation and keratinocyte differentiation. Furthermore, is essential for the regulation of cellular cholesterol homeostasis by regulating ABCA1-dependent cholesterol efflux from macrophages through interaction with NR1H2 and ABCA1. Plays pleiotropic roles in regulating glucose stimulated insulin secretion from beta cells, regulating the morphology and fusion of insulin granules, lipid raft abundance and the actin cytoskeleton. Also involved in lung surfactant biogenesis. This is Glucosylceramide transporter ABCA12 from Mus musculus (Mouse).